A 199-amino-acid polypeptide reads, in one-letter code: Single-stranded DNA-binding protein 2 (199 aa).

The SSB domain maps to 1–110 (MAGETVITVV…LDVDEVGASL (110 aa)). Residues 114 to 199 (TAKVTKTSGQ…GGGYSDEPPF (86 aa)) form a disordered region. Positions 123-156 (QGRGGQGGYGGGGGGQGGGGWGGGPGGGQQGGGA) are enriched in gly residues. A compositionally biased stretch (low complexity) spans 157 to 166 (PADDPWATGG). Positions 167–193 (APAGGQQGGGGQGGGGWGGGSGGGGGY) are enriched in gly residues.

Homotetramer. Post-translationally, phosphorylated on tyrosine residue(s) when expressed in E.coli.

Its subcellular location is the cytoplasm. The protein resides in the nucleoid. In Streptomyces coelicolor (strain ATCC BAA-471 / A3(2) / M145), this protein is Single-stranded DNA-binding protein 2 (ssb2).